The chain runs to 434 residues: Na(+)/H(+) antiporter NhaA 1 (434 aa).

11 helical membrane passes run 34 to 54 (GLLLIAAATVAIVWANTPWSA), 73 to 93 (LTLGAWAADGLLAIFFFVAGL), 111 to 131 (ALPVVAAMGGMAVPALVYVLW), 141 to 161 (GWAIPTATDIAFAVAILAVIS), 171 to 191 (FLLTLAVVDDLLAITIIALFY), 194 to 214 (ELHLGYLAAAAVPLLVFALLV), 233 to 253 (VLVHESGVHATVAGVLLGFAV), 278 to 298 (SAGLAVPVFAFFAAGVTVGGF), 313 to 333 (VVTGLVVGKTVGIAGSTWLLA), 346 to 366 (WVDVVGLAMLAGIGFTVSLLI), and 380 to 400 (HVKVGVLVGSLAATALATGVL).

It belongs to the NhaA Na(+)/H(+) (TC 2.A.33) antiporter family.

It localises to the cell membrane. It catalyses the reaction Na(+)(in) + 2 H(+)(out) = Na(+)(out) + 2 H(+)(in). In terms of biological role, na(+)/H(+) antiporter that extrudes sodium in exchange for external protons. This chain is Na(+)/H(+) antiporter NhaA 1, found in Nocardioides sp. (strain ATCC BAA-499 / JS614).